A 569-amino-acid chain; its full sequence is Protein GPR108 (569 aa).

Residues 1–34 form the signal peptide; sequence MAVSERRGLSGESPTQCRWGYLSLLVLTLSGCSG. N-linked (GlcNAc...) asparagine glycans are attached at residues Asn59, Asn111, and Asn182. Residues 144–219 are disordered; the sequence is LLPEAPTQSG…DPSGKEKDQV (76 aa). Polar residues predominate over residues 180–192; sequence KENQTAPQVSGDK. The segment covering 194–203 has biased composition (basic and acidic residues); the sequence is TPGEHRHSSE. Residues Asn226 and Asn230 are each glycosylated (N-linked (GlcNAc...) asparagine). Helical transmembrane passes span 289–309, 318–338, 362–382, 393–413, 427–447, 475–495, and 499–519; these read LYLI…SVLC, IHWL…FHSI, LLKG…WAFV, IFGI…VIES, ILFL…VWSI, VMVI…QVAV, and WQWL…VLTG.

It belongs to the LU7TM family. In terms of tissue distribution, high expression in spleen, lung, stomach, large and small intestine, and thymus.

It is found in the golgi apparatus. Its subcellular location is the cis-Golgi network membrane. It localises to the trans-Golgi network membrane. The protein resides in the golgi apparatus membrane. Its function is as follows. May play a role in intracellular immune modulation by activating NF-kappaB response and attenuating Toll-like-receptor response. (Microbial infection) Plays an essential function in adeno-associated virus (AAV) transduction, across multiple serotypes except AAV5. May play a critical role in mediating the endosomal virus escape or in the AAV virions trafficking from endosomes to the nucleus. In Mus musculus (Mouse), this protein is Protein GPR108 (Gpr108).